The following is a 611-amino-acid chain: Rho GTPase-activating protein gacN (611 aa).

A Rho-GAP domain is found at 24-219 (KTFKKILKPG…VLIEEFHVLY (196 aa)). Residues 236–499 (IREDKRSTSE…TKLQKSSSSS (264 aa)) are a coiled coil. Residues 476-491 (NQLEKEKSKLQDELTK) show a composition bias toward basic and acidic residues. Residues 476 to 550 (NQLEKEKSKL…TTPPPPLDED (75 aa)) form a disordered region. 2 stretches are compositionally biased toward low complexity: residues 495-509 (SSSSSSSSSSSSSSS) and 527-540 (TTTTTTTTSPAQQP).

The protein localises to the cytoplasm. In terms of biological role, rho GTPase-activating protein involved in the signal transduction pathway. This chain is Rho GTPase-activating protein gacN (gacN), found in Dictyostelium discoideum (Social amoeba).